The chain runs to 284 residues: MSRFCCFGAGCSEFSGHASTSSGKGKGIQGQVKVSYGFYLVRGMTNHPMEDYHVAELAEEKGNELGLFAIFDGHLGDTVPAYLQKNLFANILNEEEFLTQPDRAIIKAYEKTDQAILSHTPDLGQGGSTAVTAILLNGRKLWVANVGDSRAVLLKGGRPIQMSTDHDPNVERSAIENRGGFVSNMPGDVPRVCGQLAVSRAFGDRNLKSLLKSEPDIKVEDIDYTAELLVLASDGLWKVMNNQEVVDVAKRFKDPQAAAKQLTAEALKRDSKDDISCVVVRFRM.

Residues 35-282 (SYGFYLVRGM…DDISCVVVRF (248 aa)) form the PPM-type phosphatase domain. Mn(2+)-binding residues include Asp-72, Gly-73, Asp-234, and Asp-273.

The protein belongs to the PP2C family. Mg(2+) serves as cofactor. It depends on Mn(2+) as a cofactor.

The enzyme catalyses O-phospho-L-seryl-[protein] + H2O = L-seryl-[protein] + phosphate. The catalysed reaction is O-phospho-L-threonyl-[protein] + H2O = L-threonyl-[protein] + phosphate. This is Probable protein phosphatase 2C 41 from Oryza sativa subsp. japonica (Rice).